A 484-amino-acid chain; its full sequence is N-succinylglutamate 5-semialdehyde dehydrogenase (484 aa).

Gly-221–Gly-226 contributes to the NAD(+) binding site. Catalysis depends on residues Glu-244 and Cys-278.

Belongs to the aldehyde dehydrogenase family. AstD subfamily.

It catalyses the reaction N-succinyl-L-glutamate 5-semialdehyde + NAD(+) + H2O = N-succinyl-L-glutamate + NADH + 2 H(+). It functions in the pathway amino-acid degradation; L-arginine degradation via AST pathway; L-glutamate and succinate from L-arginine: step 4/5. Functionally, catalyzes the NAD-dependent reduction of succinylglutamate semialdehyde into succinylglutamate. The chain is N-succinylglutamate 5-semialdehyde dehydrogenase from Caulobacter sp. (strain K31).